We begin with the raw amino-acid sequence, 401 residues long: Acetylornithine aminotransferase (401 aa).

Pyridoxal 5'-phosphate is bound by residues 121-122 (GA) and F154. R157 serves as a coordination point for N(2)-acetyl-L-ornithine. 239 to 242 (DEVQ) contacts pyridoxal 5'-phosphate. Position 268 is an N6-(pyridoxal phosphate)lysine (K268). A N(2)-acetyl-L-ornithine-binding site is contributed by S296. A pyridoxal 5'-phosphate-binding site is contributed by T297.

It belongs to the class-III pyridoxal-phosphate-dependent aminotransferase family. ArgD subfamily. In terms of assembly, homodimer. Requires pyridoxal 5'-phosphate as cofactor.

The protein resides in the cytoplasm. It catalyses the reaction N(2)-acetyl-L-ornithine + 2-oxoglutarate = N-acetyl-L-glutamate 5-semialdehyde + L-glutamate. It participates in amino-acid biosynthesis; L-arginine biosynthesis; N(2)-acetyl-L-ornithine from L-glutamate: step 4/4. The chain is Acetylornithine aminotransferase from Myxococcus xanthus.